Reading from the N-terminus, the 366-residue chain is Flagellar P-ring protein (366 aa).

An N-terminal signal peptide occupies residues 1–20 (MVIKFLSALILLLVTTAAQA).

This sequence belongs to the FlgI family. The basal body constitutes a major portion of the flagellar organelle and consists of four rings (L,P,S, and M) mounted on a central rod.

It is found in the periplasm. It localises to the bacterial flagellum basal body. Its function is as follows. Assembles around the rod to form the L-ring and probably protects the motor/basal body from shearing forces during rotation. This Escherichia coli (strain SE11) protein is Flagellar P-ring protein.